The chain runs to 524 residues: Metalloendopeptidase OMA1, mitochondrial (524 aa).

The N-terminal 13 residues, 1–13, are a transit peptide targeting the mitochondrion; sequence MSFICGLQSAARN. The propeptide occupies 14 to 143; that stretch reads HVFFRFNSLS…RNFHTSPRFQ (130 aa). Topologically, residues 144–195 are mitochondrial matrix; that stretch reads AAPVPLLLMILKPVQKLFAIIVGRGIRKWWQALPPNKKEVVKENIRKNKWKL. The tract at residues 148 to 167 is cardiolipin-binding; the sequence is PLLLMILKPVQKLFAIIVGR. The stress-sensor region stretch occupies residues 165 to 195; that stretch reads VGRGIRKWWQALPPNKKEVVKENIRKNKWKL. Residues 196 to 216 form a helical membrane-spanning segment; that stretch reads FLGLSSFGLLFVVFYFTHLEV. H327 serves as a coordination point for Zn(2+). E328 is an active-site residue. Zn(2+) contacts are provided by H331 and E392. A disulfide bridge links C407 with C465.

Belongs to the peptidase M48 family. Homooligomer. The cofactor is Zn(2+). In terms of processing, may form a redox-dependent disulfide bond. Exists in a semi-oxidized state and is activated by prolonged hypoxia. Autocatalytically cleaved in response to mitochondrial depolarization both at the N-terminus and C-terminus to generate the short active form (S-OMA1). Autocatalytic processing at the C-terminus takes place at residues 447-456. The S-OMA1 form is unstable. OMA1 pre-processing by AFG3L2 may participate in maturation before OMA1 autocatalytic cleavage. Degraded by YMEL1 in response to membrane depolarization. Protein turnover is regulated by prohibitin (PHB and PHB2), which promotes degradation of OMA1 in a cardiolipin-binding manner. Widely expressed, with strong expression in the heart, skeletal muscle, kidney and liver.

It is found in the mitochondrion inner membrane. Its activity is regulated as follows. Protease activity is activated upon autocatalytic cleavage in response to mitochondrial depolarization. Functionally, metalloprotease that is part of the quality control system in the inner membrane of mitochondria. Activated in response to various mitochondrial stress, leading to the proteolytic cleavage of target proteins, such as OPA1, UQCC3 and DELE1. Involved in the fusion of the mitochondrial inner membranes by mediating cleavage of OPA1 at S1 position, generating the soluble OPA1 (S-OPA1), which cooperates with the membrane form (L-OPA1) to coordinate the fusion of mitochondrial inner membranes. Following stress conditions that induce loss of mitochondrial membrane potential, mediates cleavage of OPA1, leading to excess production of soluble OPA1 (S-OPA1) and negative regulation of mitochondrial fusion. Involved in mitochondrial safeguard in response to transient mitochondrial membrane depolarization (flickering) by catalyzing cleavage of OPA1, leading to excess production of S-OPA1, preventing mitochondrial hyperfusion. Also acts as a regulator of apoptosis: upon BAK and BAX aggregation, mediates cleavage of OPA1, leading to the remodeling of mitochondrial cristae and allowing the release of cytochrome c from mitochondrial cristae. In depolarized mitochondria, may also act as a backup protease for PINK1 by mediating PINK1 cleavage and promoting its subsequent degradation by the proteasome. May also cleave UQCC3 in response to mitochondrial depolarization. Also acts as an activator of the integrated stress response (ISR): in response to mitochondrial stress, mediates cleavage of DELE1 to generate the processed form of DELE1 (S-DELE1), which translocates to the cytosol and activates EIF2AK1/HRI to trigger the ISR. Its role in mitochondrial quality control is essential for regulating lipid metabolism as well as to maintain body temperature and energy expenditure under cold-stress conditions. Binds cardiolipin, possibly regulating its protein turnover. Required for the stability of the respiratory supercomplexes. The protein is Metalloendopeptidase OMA1, mitochondrial of Homo sapiens (Human).